We begin with the raw amino-acid sequence, 1275 residues long: ATP-dependent helicase/nuclease subunit A (1275 aa).

The UvrD-like helicase ATP-binding domain occupies 4-481 (PKWTKEQLEV…IMLYKNFRSR (478 aa)). 25-32 (AAAGSGKT) contacts ATP. The UvrD-like helicase C-terminal domain occupies 531–839 (TEIHLIQKDN…RIMSIHKSKG (309 aa)).

Belongs to the helicase family. AddA subfamily. In terms of assembly, heterodimer of AddA and AddB/RexB. Requires Mg(2+) as cofactor.

It carries out the reaction Couples ATP hydrolysis with the unwinding of duplex DNA by translocating in the 3'-5' direction.. The catalysed reaction is ATP + H2O = ADP + phosphate + H(+). The heterodimer acts as both an ATP-dependent DNA helicase and an ATP-dependent, dual-direction single-stranded exonuclease. Recognizes the chi site generating a DNA molecule suitable for the initiation of homologous recombination. The AddA nuclease domain is required for chi fragment generation; this subunit has the helicase and 3' -&gt; 5' nuclease activities. This Clostridioides difficile (strain 630) (Peptoclostridium difficile) protein is ATP-dependent helicase/nuclease subunit A.